The primary structure comprises 92 residues: Cell division protein FtsB (92 aa).

The Cytoplasmic segment spans residues Met1 to Phe3. A helical membrane pass occupies residues Phe4–Phe21. Residues Gly22–Gln92 are Periplasmic-facing. Residues Leu40–Asn73 adopt a coiled-coil conformation.

It belongs to the FtsB family. As to quaternary structure, part of a complex composed of FtsB, FtsL and FtsQ.

Its subcellular location is the cell inner membrane. In terms of biological role, essential cell division protein. May link together the upstream cell division proteins, which are predominantly cytoplasmic, with the downstream cell division proteins, which are predominantly periplasmic. In Pseudoalteromonas translucida (strain TAC 125), this protein is Cell division protein FtsB.